A 940-amino-acid chain; its full sequence is Inter-alpha-trypsin inhibitor heavy chain H5 (940 aa).

The N-terminal stretch at Met1 to Gly16 is a signal peptide. One can recognise a VIT domain in the interval Ile35 to Glu161. N-linked (GlcNAc...) asparagine glycans are attached at residues Asn97 and Asn127. A disordered region spans residues Asn207–Val227. Residues Asn231, Asn421, Asn508, Asn694, Asn778, and Asn795 are each glycosylated (N-linked (GlcNAc...) asparagine). The VWFA domain maps to Asn295 to Ile478.

This sequence belongs to the ITIH family.

It is found in the secreted. In terms of biological role, may act as a tumor suppressor. This is Inter-alpha-trypsin inhibitor heavy chain H5 (ITIH5) from Bos taurus (Bovine).